The chain runs to 142 residues: Hemoglobin A subunit alpha-2 (142 aa).

The Globin domain maps to 2-142; that stretch reads VLTAGDKANV…VAQNLTSKYR (141 aa). Histidine 59 is a binding site for O2. Histidine 88 contacts heme b.

It belongs to the globin family. As to quaternary structure, tetramer of alpha-1, alpha-2 and two identical beta chains. Red blood cells.

In terms of biological role, involved in oxygen transport from the lung to the various peripheral tissues. This is Hemoglobin A subunit alpha-2 from Aldabrachelys gigantea (Aldabra giant tortoise).